The chain runs to 122 residues: Large ribosomal subunit protein uL14c (122 aa).

It belongs to the universal ribosomal protein uL14 family. Part of the 50S ribosomal subunit.

Its subcellular location is the plastid. It localises to the chloroplast. In terms of biological role, binds to 23S rRNA. In Buxus microphylla (Littleleaf boxwood), this protein is Large ribosomal subunit protein uL14c.